Here is a 543-residue protein sequence, read N- to C-terminus: ATP synthase subunit alpha (543 aa).

ATP is bound at residue 174–181; sequence GDRQTGKT. The tract at residues 521 to 543 is disordered; that stretch reads VEKKPDVDKAAPVDQEKIVAGEK.

The protein belongs to the ATPase alpha/beta chains family. In terms of assembly, F-type ATPases have 2 components, CF(1) - the catalytic core - and CF(0) - the membrane proton channel. CF(1) has five subunits: alpha(3), beta(3), gamma(1), delta(1), epsilon(1). CF(0) has three main subunits: a(1), b(2) and c(9-12). The alpha and beta chains form an alternating ring which encloses part of the gamma chain. CF(1) is attached to CF(0) by a central stalk formed by the gamma and epsilon chains, while a peripheral stalk is formed by the delta and b chains.

The protein resides in the cell membrane. The catalysed reaction is ATP + H2O + 4 H(+)(in) = ADP + phosphate + 5 H(+)(out). Its function is as follows. Produces ATP from ADP in the presence of a proton gradient across the membrane. The alpha chain is a regulatory subunit. In Bifidobacterium longum (strain DJO10A), this protein is ATP synthase subunit alpha.